Consider the following 509-residue polypeptide: Probable cation transporter HKT2;3 (509 aa).

Topologically, residues 1-32 (MPIRLHIFVNSARHAINSSAFICRFIAYHLSP) are cytoplasmic. 2 helical membrane passes run 33 to 53 (LLIH…SLVV) and 96 to 116 (ILTL…GLVL). Residues 117-164 (ESSKQNKHDPENRRVSSVTVCKQSQLEEATPQTPSMNSIDIKKRCLKY) are Cytoplasmic-facing. The next 2 membrane-spanning stretches (helical) occupy residues 165–185 (LVFV…LLVF) and 237–257 (GLLL…PVFL). At 258–296 (RLVIWALRGLRLAKAEEPDFMMNNSSAVGFSHLLPNLQT) the chain is on the cytoplasmic side. 2 consecutive transmembrane segments (helical) span residues 297–317 (IFLA…FCCL) and 353–373 (CSLV…TPSL). Over 374-400 (TKLFSACQDHKRIGPESDDRTSKGKPF) the chain is Cytoplasmic. A run of 2 helical transmembrane segments spans residues 401–421 (LKMM…LVCI) and 474–494 (AYNF…LAML). At 495–509 (CGRLNSKDSTSARTR) the chain is on the cytoplasmic side.

The protein belongs to the TrkH potassium transport family. HKT (TC 2.A.38.3) subfamily.

The protein resides in the membrane. Functionally, probable cation transporter. May be involved in regulation of potassium-sodium homeostasis. The polypeptide is Probable cation transporter HKT2;3 (Oryza sativa subsp. japonica (Rice)).